The chain runs to 155 residues: Small ribosomal subunit protein uS7cz/uS7cy (155 aa).

It belongs to the universal ribosomal protein uS7 family. In terms of assembly, part of the 30S ribosomal subunit.

The protein resides in the plastid. The protein localises to the chloroplast. In terms of biological role, one of the primary rRNA binding proteins, it binds directly to 16S rRNA where it nucleates assembly of the head domain of the 30S subunit. The protein is Small ribosomal subunit protein uS7cz/uS7cy (rps7-A) of Calycanthus floridus var. glaucus (Eastern sweetshrub).